A 363-amino-acid chain; its full sequence is NAD(P)H-quinone oxidoreductase subunit 1, chloroplastic (363 aa).

The next 7 helical transmembrane spans lie at 30–50 (LVPILTLVVGITIGVLVIVWL), 98–118 (FSIGPSMAVISILLSYSVIPF), 129–149 (VGVFLWIAISSIAPIGLLMSG), 165–185 (AAQSISYEIPLTLCVLSISLL), 253–273 (FAFFYITSYFNLLVSSLFVTI), 303–323 (TTTELFITLAKTFFFLFISIT), and 336–356 (LLNLGWKFLLPISLGNLLLTT).

The protein belongs to the complex I subunit 1 family. As to quaternary structure, NDH is composed of at least 16 different subunits, 5 of which are encoded in the nucleus.

It is found in the plastid. The protein resides in the chloroplast thylakoid membrane. It carries out the reaction a plastoquinone + NADH + (n+1) H(+)(in) = a plastoquinol + NAD(+) + n H(+)(out). The catalysed reaction is a plastoquinone + NADPH + (n+1) H(+)(in) = a plastoquinol + NADP(+) + n H(+)(out). In terms of biological role, NDH shuttles electrons from NAD(P)H:plastoquinone, via FMN and iron-sulfur (Fe-S) centers, to quinones in the photosynthetic chain and possibly in a chloroplast respiratory chain. The immediate electron acceptor for the enzyme in this species is believed to be plastoquinone. Couples the redox reaction to proton translocation, and thus conserves the redox energy in a proton gradient. The chain is NAD(P)H-quinone oxidoreductase subunit 1, chloroplastic from Pelargonium hortorum (Common geranium).